The sequence spans 337 residues: Fructose-1,6-bisphosphatase class 1 (337 aa).

4 residues coordinate Mg(2+): E94, D116, L118, and D119. Substrate is bound by residues 119-122 (DGSS), N210, and K276. E282 is a binding site for Mg(2+).

This sequence belongs to the FBPase class 1 family. As to quaternary structure, homotetramer. It depends on Mg(2+) as a cofactor.

It localises to the cytoplasm. It catalyses the reaction beta-D-fructose 1,6-bisphosphate + H2O = beta-D-fructose 6-phosphate + phosphate. It participates in carbohydrate biosynthesis; gluconeogenesis. The chain is Fructose-1,6-bisphosphatase class 1 from Burkholderia lata (strain ATCC 17760 / DSM 23089 / LMG 22485 / NCIMB 9086 / R18194 / 383).